Here is a 492-residue protein sequence, read N- to C-terminus: Vacuolar fusion protein CCZ1 homolog (492 aa).

The disordered stretch occupies residues Ser255–Leu275. Over residues Pro260–Ala269 the composition is skewed to polar residues.

It belongs to the CCZ1 family. As to quaternary structure, interacts with MON1.

The protein localises to the endosome. The protein resides in the prevacuolar compartment. Its function is as follows. Plays an important role in membrane trafficking through the secretory apparatus. In complex with MON1, acts as a guanine exchange factor (GEF) for Rab7 protein family. Promotes the exchange of GDP to GTP, converting it from an inactive GDP-bound form into an active GTP-bound form. The active form is involved in protein trafficking from prevacuolar compartments (PVCs) to vacuoles. May serve as a linker between Rab5 and Rab7 protein families in PVCs and mediate PVC maturation. This chain is Vacuolar fusion protein CCZ1 homolog, found in Oryza sativa subsp. japonica (Rice).